Consider the following 261-residue polypeptide: Uridylate kinase (261 aa).

The segment at 1–23 (MTEPDVAGAPASKPEPASTGAAS) is disordered. 36–39 (KLGG) serves as a coordination point for ATP. A UMP-binding site is contributed by G77. G78 and R82 together coordinate ATP. Residues D97 and 158–165 (MGLPYFST) contribute to the UMP site. Positions 191 and 194 each coordinate ATP.

Belongs to the UMP kinase family. As to quaternary structure, homohexamer.

It is found in the cytoplasm. The enzyme catalyses UMP + ATP = UDP + ADP. It functions in the pathway pyrimidine metabolism; CTP biosynthesis via de novo pathway; UDP from UMP (UMPK route): step 1/1. Inhibited by UTP. Functionally, catalyzes the reversible phosphorylation of UMP to UDP. The chain is Uridylate kinase from Mycobacterium tuberculosis (strain ATCC 25177 / H37Ra).